Here is a 385-residue protein sequence, read N- to C-terminus: tRNA-specific 2-thiouridylase MnmA (385 aa).

ATP contacts are provided by residues 30–37 and Met56; that span reads GMSGGVDS. Residues 118–120 are interaction with target base in tRNA; that stretch reads NPD. Residue Cys123 is the Nucleophile of the active site. Cys123 and Cys220 are disulfide-bonded. Gly148 provides a ligand contact to ATP. The segment at 170–172 is interaction with tRNA; the sequence is KDQ. Cys220 (cysteine persulfide intermediate) is an active-site residue. The interaction with tRNA stretch occupies residues 332–333; the sequence is RY.

This sequence belongs to the MnmA/TRMU family.

Its subcellular location is the cytoplasm. The catalysed reaction is S-sulfanyl-L-cysteinyl-[protein] + uridine(34) in tRNA + AH2 + ATP = 2-thiouridine(34) in tRNA + L-cysteinyl-[protein] + A + AMP + diphosphate + H(+). In terms of biological role, catalyzes the 2-thiolation of uridine at the wobble position (U34) of tRNA, leading to the formation of s(2)U34. The chain is tRNA-specific 2-thiouridylase MnmA from Haemophilus influenzae (strain PittGG).